The primary structure comprises 278 residues: Large ribosomal subunit protein uL2 (278 aa).

Disordered stretches follow at residues 28-56 (KPVK…GIAG) and 221-278 (RGVA…KKKR). Residues 269–278 (IRSRHAKKKR) show a composition bias toward basic residues.

The protein belongs to the universal ribosomal protein uL2 family. In terms of assembly, part of the 50S ribosomal subunit. Forms a bridge to the 30S subunit in the 70S ribosome.

In terms of biological role, one of the primary rRNA binding proteins. Required for association of the 30S and 50S subunits to form the 70S ribosome, for tRNA binding and peptide bond formation. It has been suggested to have peptidyltransferase activity; this is somewhat controversial. Makes several contacts with the 16S rRNA in the 70S ribosome. In Rhizorhabdus wittichii (strain DSM 6014 / CCUG 31198 / JCM 15750 / NBRC 105917 / EY 4224 / RW1) (Sphingomonas wittichii), this protein is Large ribosomal subunit protein uL2.